Here is a 614-residue protein sequence, read N- to C-terminus: Chaperone protein HtpG (614 aa).

The segment at methionine 1–arginine 324 is a; substrate-binding. Residues glutamate 325–arginine 537 are b. The c stretch occupies residues methionine 538–arginine 614.

It belongs to the heat shock protein 90 family. As to quaternary structure, homodimer.

It localises to the cytoplasm. Functionally, molecular chaperone. Has ATPase activity. This chain is Chaperone protein HtpG, found in Desulfitobacterium hafniense (strain Y51).